The chain runs to 423 residues: D-tagatose-1,6-bisphosphate aldolase subunit GatZ (423 aa).

It belongs to the GatZ/KbaZ family. GatZ subfamily. In terms of assembly, forms a complex with GatY.

The protein operates within carbohydrate metabolism; D-tagatose 6-phosphate degradation; D-glyceraldehyde 3-phosphate and glycerone phosphate from D-tagatose 6-phosphate: step 2/2. Functionally, component of the tagatose-1,6-bisphosphate aldolase GatYZ that is required for full activity and stability of the Y subunit. Could have a chaperone-like function for the proper and stable folding of GatY. When expressed alone, GatZ does not show any aldolase activity. Is involved in the catabolism of galactitol. The protein is D-tagatose-1,6-bisphosphate aldolase subunit GatZ of Salmonella agona (strain SL483).